Here is a 425-residue protein sequence, read N- to C-terminus: E3 ubiquitin-protein ligase GW2 (425 aa).

The segment at 62-105 adopts an RING-type; degenerate zinc-finger fold; sequence CPICFLYYPSLNRSKCCSKGICTECFLQMKPTHTAQPTQCPFCK.

In terms of tissue distribution, expressed in roots, shoots, leaves, inflorescence meristems, stamens, pistils, spikelet hulls and endosperms 4 days after fertilization.

Its subcellular location is the cytoplasm. The catalysed reaction is S-ubiquitinyl-[E2 ubiquitin-conjugating enzyme]-L-cysteine + [acceptor protein]-L-lysine = [E2 ubiquitin-conjugating enzyme]-L-cysteine + N(6)-ubiquitinyl-[acceptor protein]-L-lysine.. It participates in protein modification; protein ubiquitination. Functionally, E3 ubiquitin-protein ligase involved in the regulation of grain size. May limit grain width and weight by restricting cell proliferation of the spikelet hull. Possesses E3 ubiquitin-protein ligase activity in vitro. This is E3 ubiquitin-protein ligase GW2 from Oryza sativa subsp. indica (Rice).